A 204-amino-acid polypeptide reads, in one-letter code: Arginine exporter protein ArgO (204 aa).

Helical transmembrane passes span 1 to 21, 37 to 57, 67 to 87, 111 to 131, 147 to 167, and 179 to 199; these read MFAVFLQGALLGAAMILPLGP, LMVALLCALSDMVLITAGIFG, LLLGAVTWGGVAFLLWFGWGA, IIATMLAVTWLNPHVYLDTFV, WFALGTMTASFTWFFALALLA, and VQRVINFFVGVVMWGIALQLA.

This sequence belongs to the LysE/ArgO transporter (TC 2.A.75) family.

The protein localises to the cell inner membrane. It catalyses the reaction L-arginine(in) = L-arginine(out). Functionally, involved in the export of arginine. Important to control the intracellular level of arginine and the correct balance between arginine and lysine. The sequence is that of Arginine exporter protein ArgO from Pectobacterium carotovorum subsp. carotovorum (strain PC1).